We begin with the raw amino-acid sequence, 353 residues long: G-protein complex alpha subunit gpaA (353 aa).

The tract at residues 1-25 is disordered; sequence MGCGMSTEDKEGKARNEEIENQLKR. Over residues 7 to 25 the composition is skewed to basic and acidic residues; that stretch reads TEDKEGKARNEEIENQLKR. In terms of domain architecture, G-alpha spans 32 to 353; it reads NEIKMLLLGA…QENLRLCGLI (322 aa). Residues 35-48 form a G1 motif region; the sequence is KMLLLGAGESGKST. Residues Ser47 and Thr181 each contribute to the a divalent metal cation site. The segment at 173 to 181 is G2 motif; it reads DVLRSRVKT. The segment at 196 to 205 is G3 motif; it reads YRMFDVGGQR. The interval 265–272 is G4 motif; sequence ILFLNKID. Residues 323–328 form a G5 motif region; it reads TCATDT.

The protein belongs to the G-alpha family. G(q) subfamily. G proteins are composed of 3 units; alpha, beta and gamma. The alpha chain contains the guanine nucleotide binding site. Interacts with gprM.

Functionally, G-protein complex alpha subunit that plays a role in conidiation and regulation of the biosynthesis of secondary metabolites such as dihydroxynaphthalene (DHN)-melanin, via interaction with the G protein-coupled receptor gprM. In Aspergillus fumigatus (strain CBS 144.89 / FGSC A1163 / CEA10) (Neosartorya fumigata), this protein is G-protein complex alpha subunit gpaA.